The chain runs to 140 residues: ATP synthase epsilon chain 1 (140 aa).

It belongs to the ATPase epsilon chain family. In terms of assembly, F-type ATPases have 2 components, CF(1) - the catalytic core - and CF(0) - the membrane proton channel. CF(1) has five subunits: alpha(3), beta(3), gamma(1), delta(1), epsilon(1). CF(0) has three main subunits: a, b and c.

It localises to the cell inner membrane. Functionally, produces ATP from ADP in the presence of a proton gradient across the membrane. In Methylococcus capsulatus (strain ATCC 33009 / NCIMB 11132 / Bath), this protein is ATP synthase epsilon chain 1.